The sequence spans 117 residues: Ig heavy chain V region 5-84 (117 aa).

An N-terminal signal peptide occupies residues 1–19 (MNFGLSLIFLVLVLKGVLC). The framework-1 stretch occupies residues 20–49 (EVKLVESGGGLVQPGGSLKLSCAASGFTFS). The cysteines at positions 41 and 115 are disulfide-linked. The tract at residues 50–54 (SYTMS) is complementarity-determining-1. The segment at 55–68 (WVRQTPEKRLEWVA) is framework-2. The interval 69–85 (YISNGGGSTYYPDTVKG) is complementarity-determining-2. The tract at residues 86–117 (RFTISRDNAKNNLYLQMSSLKSEDTAMYYCAR) is framework-3.

The chain is Ig heavy chain V region 5-84 from Mus musculus (Mouse).